A 53-amino-acid chain; its full sequence is ADNMSLTGLSDEEAKEFHSIFMQSFLIFTAVAVVAHFLAWAWRPWIPGAEGYG.

Residues 1-19 (ADNMSLTGLSDEEAKEFHS) are Cytoplasmic-facing. Positions 18 and 36 each coordinate a bacteriochlorophyll. Residues 20 to 42 (IFMQSFLIFTAVAVVAHFLAWAW) traverse the membrane as a helical segment. Residues 43–53 (RPWIPGAEGYG) are Periplasmic-facing.

It belongs to the antenna complex beta subunit family. As to quaternary structure, the core complex is formed by different alpha and beta chains, binding bacteriochlorophyll molecules, and arranged most probably in tetrameric structures disposed around the reaction center. The non-pigmented gamma chains may constitute additional components.

It is found in the cell inner membrane. Its function is as follows. Antenna complexes are light-harvesting systems, which transfer the excitation energy to the reaction centers. In Halorhodospira halophila (strain DSM 244 / SL1) (Ectothiorhodospira halophila (strain DSM 244 / SL1)), this protein is Light-harvesting protein B800/850/890 beta-1 chain.